A 131-amino-acid chain; its full sequence is Period circadian protein (131 aa).

Positions Val29–Val109 are disordered. Residues Ser71–Thr93 show a composition bias toward low complexity. A compositionally biased stretch (gly residues) spans Gly94–Val109.

As to quaternary structure, forms a heterodimer with timeless (TIM); the complex then translocates into the nucleus. Phosphorylated with a circadian rhythmicity, probably by the double-time protein (dbt). Phosphorylation could be implicated in the stability of per monomer and in the formation of heterodimer per-tim.

It is found in the nucleus. It localises to the cytoplasm. The protein localises to the perinuclear region. Essential for biological clock functions. Determines the period length of circadian and ultradian rhythms; an increase in PER dosage leads to shortened circadian rhythms and a decrease leads to lengthened circadian rhythms. Essential for the circadian rhythmicity of locomotor activity, eclosion behavior, and for the rhythmic component of the male courtship song that originates in the thoracic nervous system. The biological cycle depends on the rhythmic formation and nuclear localization of the TIM-PER complex. Light induces the degradation of TIM, which promotes elimination of PER. Nuclear activity of the heterodimer coordinatively regulates PER and TIM transcription through a negative feedback loop. Behaves as a negative element in circadian transcriptional loop. Does not appear to bind DNA, suggesting indirect transcriptional inhibition. In Zaprionus tuberculatus (Vinegar fly), this protein is Period circadian protein (per).